A 188-amino-acid polypeptide reads, in one-letter code: Shikimate kinase (188 aa).

ATP is bound at residue 21-26 (GAGKTT). Threonine 25 is a binding site for Mg(2+). Aspartate 43, arginine 67, and glycine 90 together coordinate substrate. Position 130 (arginine 130) interacts with ATP. Arginine 148 provides a ligand contact to substrate.

It belongs to the shikimate kinase family. Monomer. Mg(2+) is required as a cofactor.

It is found in the cytoplasm. It carries out the reaction shikimate + ATP = 3-phosphoshikimate + ADP + H(+). It participates in metabolic intermediate biosynthesis; chorismate biosynthesis; chorismate from D-erythrose 4-phosphate and phosphoenolpyruvate: step 5/7. Functionally, catalyzes the specific phosphorylation of the 3-hydroxyl group of shikimic acid using ATP as a cosubstrate. This is Shikimate kinase from Geobacillus kaustophilus (strain HTA426).